Here is a 76-residue protein sequence, read N- to C-terminus: Small ribosomal subunit protein bS16 (76 aa).

It belongs to the bacterial ribosomal protein bS16 family.

The chain is Small ribosomal subunit protein bS16 from Helicobacter pylori (strain P12).